The sequence spans 1891 residues: Endoribonuclease Dicer-L (1891 aa).

The Helicase ATP-binding domain occupies 41–217; sequence LLEAALDHNT…DLEEKIQKLE (177 aa). 54-61 is an ATP binding site; it reads LNSGSGKT. The short motif at 165–168 is the DECH box element; that stretch reads DECH. The Helicase C-terminal domain occupies 425 to 594; the sequence is SFPSPFTNIL…SIDCGNTESE (170 aa). A Dicer dsRNA-binding fold domain is found at 622-714; it reads AIGHINRYCA…MPVGKETVKY (93 aa). Residues 887–1034 enclose the PAZ domain; sequence KFVEDIEKSE…LVPELCAIHP (148 aa). RNase III domains follow at residues 1248 to 1379 and 1635 to 1793; these read TSDM…ETSG and FENF…MDSG. Residues Glu-1292, Asp-1370, Glu-1373, Glu-1674, Asp-1779, and Glu-1782 each contribute to the Mg(2+) site. In terms of domain architecture, DRBM spans 1818–1883; it reads VPRSPVRELL…ARRALRSLKA (66 aa).

It belongs to the helicase family. Dicer subfamily. In terms of assembly, component of the RISC loading complex (RLC), or micro-RNA (miRNA) loading complex (miRLC), which is composed of dicer1, ago2 and tarbp2; dicer1 and tarbp2 are required to process precursor miRNAs (pre-miRNAs) to mature miRNAs and then load them onto ago2. Note that the trimeric RLC/miRLC is also referred to as RISC. The cofactor is Mg(2+). Requires Mn(2+) as cofactor.

It localises to the cytoplasm. It catalyses the reaction Endonucleolytic cleavage to 5'-phosphomonoester.. Its function is as follows. Double-stranded RNA (dsRNA) endoribonuclease playing a central role in short dsRNA-mediated post-transcriptional gene silencing. Cleaves naturally occurring long dsRNAs and short hairpin pre-microRNAs (miRNA) into fragments of 21 to 23 nucleotides with 3' overhang of two nucleotides, producing respectively short interfering RNAs (siRNA) and mature microRNAs. SiRNAs and miRNAs serve as guide to direct the RNA-induced silencing complex (RISC) to complementary RNAs to degrade them or prevent their translation. Gene silencing mediated by siRNAs, also called RNA interference, controls the elimination of transcripts from mobile and repetitive DNA elements of the genome but also the degradation of exogenous RNA of viral origin for instance. The miRNA pathway on the other side is a mean to specifically regulate the expression of target genes. During embryonic development, at the left-right organizer, post-transcriptionally regulates the expression of dand5 in flow sensor cells. In post-flow stages, acts along with Bicc1 to repress dand5 mRNA translation and decay. Decreased Dand5 expression lifts repression of Nodal and defines leftness by induction of the lateral plate mesoderm Nodal signaling cascade. The protein is Endoribonuclease Dicer-L (dicer1.L) of Xenopus laevis (African clawed frog).